The chain runs to 61 residues: Transmembrane protein 300R (61 aa).

The next 2 helical transmembrane spans lie at 5 to 25 (FLDLYMILSVLAGVIGIFYLT) and 35 to 55 (SLSYYMTLSVVTGILALIYLQ).

The protein localises to the membrane. The protein is Transmembrane protein 300R of Invertebrate iridescent virus 6 (IIV-6).